Consider the following 480-residue polypeptide: tRNA (guanine(37)-N(1))-methyltransferase (480 aa).

A mitochondrion-targeting transit peptide spans 1-18 (MAAVWRRSARLFILLQRH). Residues histidine 273, 311–312 (DL), 339–340 (DG), and asparagine 367 each bind S-adenosyl-L-methionine. Residues 458 to 480 (HTQDRDTSEEPCPKKQKCEDSTN) form a disordered region.

This sequence belongs to the class I-like SAM-binding methyltransferase superfamily. TRM5/TYW2 family. In terms of assembly, monomer.

The protein resides in the mitochondrion matrix. The protein localises to the nucleus. It localises to the cytoplasm. The catalysed reaction is guanosine(37) in tRNA + S-adenosyl-L-methionine = N(1)-methylguanosine(37) in tRNA + S-adenosyl-L-homocysteine + H(+). Functionally, involved in mitochondrial tRNA methylation. Specifically methylates the N1 position of guanosine-37 in various tRNAs. Methylation is not dependent on the nature of the nucleoside 5' of the target nucleoside. This is the first step in the biosynthesis of wybutosine (yW), a modified base adjacent to the anticodon of tRNAs and required for accurate decoding. This Danio rerio (Zebrafish) protein is tRNA (guanine(37)-N(1))-methyltransferase (trmt5).